Here is a 159-residue protein sequence, read N- to C-terminus: Transcriptional repressor NrdR (159 aa).

Over residues 1–11 (MQCPTCQNTDS) the composition is skewed to polar residues. A disordered region spans residues 1–21 (MQCPTCQNTDSRVLESRSADS). A zinc finger lies at 3–34 (CPTCQNTDSRVLESRSADSGKSVRRRRECLNC). The 91-residue stretch at 49 to 139 (VSVLKKDGGR…VYRKFNGVKD (91 aa)) folds into the ATP-cone domain.

Belongs to the NrdR family. It depends on Zn(2+) as a cofactor.

Functionally, negatively regulates transcription of bacterial ribonucleotide reductase nrd genes and operons by binding to NrdR-boxes. The protein is Transcriptional repressor NrdR of Prochlorococcus marinus (strain AS9601).